Reading from the N-terminus, the 299-residue chain is GTPase Era (299 aa).

The Era-type G domain maps to 5–172 (KSGFVSIIGR…IDVLKTYLPE (168 aa)). The segment at 13–20 (GRPNVGKS) is G1. 13–20 (GRPNVGKS) is a GTP binding site. The G2 stretch occupies residues 39–43 (QTTRN). The segment at 60–63 (DTPG) is G3. GTP is bound by residues 60–64 (DTPGI) and 122–125 (NKID). Residues 122-125 (NKID) form a G4 region. The tract at residues 151 to 153 (ISA) is G5. Positions 203-280 (TSEEIPHAIG…YLELWVKVQK (78 aa)) constitute a KH type-2 domain.

It belongs to the TRAFAC class TrmE-Era-EngA-EngB-Septin-like GTPase superfamily. Era GTPase family. In terms of assembly, monomer.

The protein resides in the cytoplasm. Its subcellular location is the cell membrane. Functionally, an essential GTPase that binds both GDP and GTP, with rapid nucleotide exchange. Plays a role in 16S rRNA processing and 30S ribosomal subunit biogenesis and possibly also in cell cycle regulation and energy metabolism. This Staphylococcus haemolyticus (strain JCSC1435) protein is GTPase Era.